The sequence spans 187 residues: UPF0301 protein YqgE (187 aa).

This sequence belongs to the UPF0301 (AlgH) family.

This is UPF0301 protein YqgE from Shigella boydii serotype 4 (strain Sb227).